A 426-amino-acid chain; its full sequence is Serine--tRNA ligase (426 aa).

231–233 (TAE) is an L-serine binding site. Position 262 to 264 (262 to 264 (RSE)) interacts with ATP. Position 285 (E285) interacts with L-serine. An ATP-binding site is contributed by 349 to 352 (EISS). S385 contributes to the L-serine binding site.

Belongs to the class-II aminoacyl-tRNA synthetase family. Type-1 seryl-tRNA synthetase subfamily. In terms of assembly, homodimer. The tRNA molecule binds across the dimer.

The protein resides in the cytoplasm. It carries out the reaction tRNA(Ser) + L-serine + ATP = L-seryl-tRNA(Ser) + AMP + diphosphate + H(+). It catalyses the reaction tRNA(Sec) + L-serine + ATP = L-seryl-tRNA(Sec) + AMP + diphosphate + H(+). It participates in aminoacyl-tRNA biosynthesis; selenocysteinyl-tRNA(Sec) biosynthesis; L-seryl-tRNA(Sec) from L-serine and tRNA(Sec): step 1/1. In terms of biological role, catalyzes the attachment of serine to tRNA(Ser). Is also able to aminoacylate tRNA(Sec) with serine, to form the misacylated tRNA L-seryl-tRNA(Sec), which will be further converted into selenocysteinyl-tRNA(Sec). This Teredinibacter turnerae (strain ATCC 39867 / T7901) protein is Serine--tRNA ligase.